We begin with the raw amino-acid sequence, 92 residues long: Small ribosomal subunit protein uS19 (92 aa).

This sequence belongs to the universal ribosomal protein uS19 family.

Functionally, protein S19 forms a complex with S13 that binds strongly to the 16S ribosomal RNA. The polypeptide is Small ribosomal subunit protein uS19 (Bacillus pumilus (strain SAFR-032)).